The sequence spans 1384 residues: DNA-directed RNA polymerase subunit beta (1384 aa).

The protein belongs to the RNA polymerase beta chain family. In terms of assembly, the RNAP catalytic core consists of 2 alpha, 1 beta, 1 beta' and 1 omega subunit. When a sigma factor is associated with the core the holoenzyme is formed, which can initiate transcription.

It carries out the reaction RNA(n) + a ribonucleoside 5'-triphosphate = RNA(n+1) + diphosphate. Its function is as follows. DNA-dependent RNA polymerase catalyzes the transcription of DNA into RNA using the four ribonucleoside triphosphates as substrates. In Xylella fastidiosa (strain M12), this protein is DNA-directed RNA polymerase subunit beta.